A 967-amino-acid polypeptide reads, in one-letter code: Aminopeptidase N (967 aa).

The Cytoplasmic segment spans residues 1 to 8 (MAKGFYIS). A helical; Signal-anchor for type II membrane protein membrane pass occupies residues 9-32 (KPVGILAILLGVAAVCTIIALSVV). The cytosolic Ser/Thr-rich junction stretch occupies residues 33 to 66 (YSQEKNRSTESSTAASTAAPTGPTTTVATTLDQS). Residues 33-967 (YSQEKNRSTE…VVLRWFTENS (935 aa)) lie on the Extracellular side of the membrane. N-linked (GlcNAc...) asparagine glycosylation occurs at N38. The segment at 41-61 (TESSTAASTAAPTGPTTTVAT) is disordered. Positions 67 to 967 (KPWNVYRLPK…VVLRWFTENS (901 aa)) are metalloprotease. N-linked (GlcNAc...) asparagine glycans are attached at residues N84 and N126. Position 175 is a sulfotyrosine (Y175). Residues N233 and N338 are each glycosylated (N-linked (GlcNAc...) asparagine). Position 351–355 (351–355 (GAMEN)) interacts with substrate. H387 contributes to the Zn(2+) binding site. The Proton acceptor role is filled by E388. The Zn(2+) site is built by H391 and E410. Y418 carries the sulfotyrosine modification. 3 N-linked (GlcNAc...) asparagine glycosylation sites follow: N626, N682, and N740. The segment at 670-840 (ASAQKVPVTL…GALACSNQVW (171 aa)) is interaction with FCoV and TGEV spike glycoprotein. 2 cysteine pairs are disulfide-bonded: C762/C769 and C799/C835.

Belongs to the peptidase M1 family. As to quaternary structure, homodimer. Interacts with SLC6A19. (Microbial infection) Interacts with FCoV, CCoV, TGEV and HCoV-229E spike glycoprotein. Zn(2+) serves as cofactor. Post-translationally, sulfated. In terms of processing, N- and O-glycosylated. May undergo proteolysis and give rise to a soluble form.

The protein localises to the cell membrane. It catalyses the reaction Release of an N-terminal amino acid, Xaa-|-Yaa- from a peptide, amide or arylamide. Xaa is preferably Ala, but may be most amino acids including Pro (slow action). When a terminal hydrophobic residue is followed by a prolyl residue, the two may be released as an intact Xaa-Pro dipeptide.. Broad specificity aminopeptidase which plays a role in the final digestion of peptides generated from hydrolysis of proteins by gastric and pancreatic proteases. Also involved in the processing of various peptides including peptide hormones, such as angiotensin III and IV, neuropeptides, and chemokines. May also be involved the cleavage of peptides bound to major histocompatibility complex class II molecules of antigen presenting cells. May have a role in angiogenesis and promote cholesterol crystallization. May have a role in amino acid transport by acting as binding partner of amino acid transporter SLC6A19 and regulating its activity. Functionally, (Microbial infection) In case of feline coronavirus (FCoV) infection, serves as a receptor for FCoV spike glycoprotein. It is as well a receptor for other serogroup I coronaviruses, like canine coronavirus (CCoV), porcine transmissible gastroenteritis virus (TGEV), and human coronavirus 229E (HCoV-229E). Also serves as a receptor for infectious bronchitis virus (IBV, Arkansas 99 serotype) in serogroup III. The chain is Aminopeptidase N (ANPEP) from Felis catus (Cat).